Reading from the N-terminus, the 144-residue chain is Large ribosomal subunit protein uL15 (144 aa).

The disordered stretch occupies residues 1–54; it reads MRLNTLSPAEGSKKAGKRLGRGIGSGLGKTGGRGHKGQKSRSGGGVRRGFEGGQ. Residues 21–31 show a composition bias toward gly residues; it reads RGIGSGLGKTG.

Belongs to the universal ribosomal protein uL15 family. Part of the 50S ribosomal subunit.

In terms of biological role, binds to the 23S rRNA. This is Large ribosomal subunit protein uL15 from Salmonella enteritidis PT4 (strain P125109).